Reading from the N-terminus, the 624-residue chain is Mannosyl-oligosaccharide 1,2-alpha-mannosidase MNS3 (624 aa).

At 1 to 43 (MSKSLPYSVKDIHYDNAKFRHRSPLKVFSQSLLTLSTKRNYAS) the chain is on the cytoplasmic side. The chain crosses the membrane as a helical; Signal-anchor for type II membrane protein span at residues 44-64 (CSTGKFLILILFFGVACLMLM). Residues 65 to 624 (SKSPNESGLN…AHPLPIRRNT (560 aa)) lie on the Lumenal side of the membrane. Residues Asn-69 and Asn-114 are each glycosylated (N-linked (GlcNAc...) asparagine). A disordered region spans residues 91–123 (LRKPPRLPPRLSPDEGQLRGSSTNGSTISNSDP). A compositionally biased stretch (low complexity) spans 110-121 (GSSTNGSTISNS). Glu-212 functions as the Proton donor in the catalytic mechanism. Asn-236 is a glycosylation site (N-linked (GlcNAc...) asparagine). Residue Asp-357 is part of the active site. N-linked (GlcNAc...) asparagine glycosylation is present at Asn-377. Cys-428 and Cys-471 form a disulfide bridge. The active-site Proton donor is the Glu-485. The N-linked (GlcNAc...) asparagine glycan is linked to Asn-503. Glu-526 is a catalytic residue. Thr-613 contributes to the Ca(2+) binding site.

This sequence belongs to the glycosyl hydrolase 47 family. It depends on Ca(2+) as a cofactor. Mn(2+) serves as cofactor. Requires Mg(2+) as cofactor. Expressed in flowers, siliques, stems, leaves, roots, stamens and sepals.

It is found in the golgi apparatus. It localises to the cis-Golgi network membrane. It catalyses the reaction N(4)-(alpha-D-Man-(1-&gt;2)-alpha-D-Man-(1-&gt;2)-alpha-D-Man-(1-&gt;3)-[alpha-D-Man-(1-&gt;2)-alpha-D-Man-(1-&gt;3)-[alpha-D-Man-(1-&gt;2)-alpha-D-Man-(1-&gt;6)]-alpha-D-Man-(1-&gt;6)]-beta-D-Man-(1-&gt;4)-beta-D-GlcNAc-(1-&gt;4)-beta-D-GlcNAc)-L-asparaginyl-[protein] (N-glucan mannose isomer 9A1,2,3B1,2,3) + 4 H2O = N(4)-(alpha-D-Man-(1-&gt;3)-[alpha-D-Man-(1-&gt;3)-[alpha-D-Man-(1-&gt;6)]-alpha-D-Man-(1-&gt;6)]-beta-D-Man-(1-&gt;4)-beta-D-GlcNAc-(1-&gt;4)-beta-D-GlcNAc)-L-asparaginyl-[protein] (N-glucan mannose isomer 5A1,2) + 4 beta-D-mannose. The catalysed reaction is N(4)-(alpha-D-Man-(1-&gt;2)-alpha-D-Man-(1-&gt;2)-alpha-D-Man-(1-&gt;3)-[alpha-D-Man-(1-&gt;3)-[alpha-D-Man-(1-&gt;2)-alpha-D-Man-(1-&gt;6)]-alpha-D-Man-(1-&gt;6)]-beta-D-Man-(1-&gt;4)-beta-D-GlcNAc-(1-&gt;4)-beta-D-GlcNAc)-L-asparaginyl-[protein] (N-glucan mannose isomer 8A1,2,3B1,3) + 3 H2O = N(4)-(alpha-D-Man-(1-&gt;3)-[alpha-D-Man-(1-&gt;3)-[alpha-D-Man-(1-&gt;6)]-alpha-D-Man-(1-&gt;6)]-beta-D-Man-(1-&gt;4)-beta-D-GlcNAc-(1-&gt;4)-beta-D-GlcNAc)-L-asparaginyl-[protein] (N-glucan mannose isomer 5A1,2) + 3 beta-D-mannose. The enzyme catalyses N(4)-(alpha-D-Man-(1-&gt;2)-alpha-D-Man-(1-&gt;2)-alpha-D-Man-(1-&gt;3)-[alpha-D-Man-(1-&gt;2)-alpha-D-Man-(1-&gt;3)-[alpha-D-Man-(1-&gt;2)-alpha-D-Man-(1-&gt;6)]-alpha-D-Man-(1-&gt;6)]-beta-D-Man-(1-&gt;4)-beta-D-GlcNAc-(1-&gt;4)-beta-D-GlcNAc)-L-asparaginyl-[protein] (N-glucan mannose isomer 9A1,2,3B1,2,3) + H2O = N(4)-(alpha-D-Man-(1-&gt;2)-alpha-D-Man-(1-&gt;2)-alpha-D-Man-(1-&gt;3)-[alpha-D-Man-(1-&gt;3)-[alpha-D-Man-(1-&gt;2)-alpha-D-Man-(1-&gt;6)]-alpha-D-Man-(1-&gt;6)]-beta-D-Man-(1-&gt;4)-beta-D-GlcNAc-(1-&gt;4)-beta-D-GlcNAc)-L-asparaginyl-[protein] (N-glucan mannose isomer 8A1,2,3B1,3) + beta-D-mannose. Its pathway is protein modification; protein glycosylation. With respect to regulation, inhibited by kifunensine and 1-deoxymannojirimycin, but not by swainsonine. Class I alpha-mannosidase essential for early N-glycan processing. Removes preferentially alpha-1,2-linked mannose residues from Man(9)GlcNAc(2) to produce Man(8)GlcNAc(2). Involved in root development and cell wall biosynthesis. The sequence is that of Mannosyl-oligosaccharide 1,2-alpha-mannosidase MNS3 (MNS3) from Arabidopsis thaliana (Mouse-ear cress).